We begin with the raw amino-acid sequence, 703 residues long: DNA ligase (703 aa).

The segment at 1 to 20 (MNDNLDLFSGAAPAAPESGA) is disordered. Over residues 9 to 20 (SGAAPAAPESGA) the composition is skewed to low complexity. Residues 53–57 (DGEYD), 102–103 (SI), and Glu-139 each bind NAD(+). Lys-141 (N6-AMP-lysine intermediate) is an active-site residue. NAD(+)-binding residues include Arg-162, Glu-200, Lys-321, and Lys-345. Residues Cys-439, Cys-442, Cys-457, and Cys-463 each coordinate Zn(2+). One can recognise a BRCT domain in the interval 622-703 (QTAQPLAGMT…MLALLAGGDR (82 aa)).

It belongs to the NAD-dependent DNA ligase family. LigA subfamily. Requires Mg(2+) as cofactor. Mn(2+) serves as cofactor.

It carries out the reaction NAD(+) + (deoxyribonucleotide)n-3'-hydroxyl + 5'-phospho-(deoxyribonucleotide)m = (deoxyribonucleotide)n+m + AMP + beta-nicotinamide D-nucleotide.. Functionally, DNA ligase that catalyzes the formation of phosphodiester linkages between 5'-phosphoryl and 3'-hydroxyl groups in double-stranded DNA using NAD as a coenzyme and as the energy source for the reaction. It is essential for DNA replication and repair of damaged DNA. This chain is DNA ligase, found in Delftia acidovorans (strain DSM 14801 / SPH-1).